We begin with the raw amino-acid sequence, 224 residues long: Protein GrpE (224 aa).

Residues 27 to 77 form a disordered region; that stretch reads NQASEDIDQENQSEVVDDTTENEDASEEVYEEDTASEDGSKEKKSFFKKKE. The segment covering 31–62 has biased composition (acidic residues); the sequence is EDIDQENQSEVVDDTTENEDASEEVYEEDTAS.

The protein belongs to the GrpE family. As to quaternary structure, homodimer.

The protein resides in the cytoplasm. Functionally, participates actively in the response to hyperosmotic and heat shock by preventing the aggregation of stress-denatured proteins, in association with DnaK and GrpE. It is the nucleotide exchange factor for DnaK and may function as a thermosensor. Unfolded proteins bind initially to DnaJ; upon interaction with the DnaJ-bound protein, DnaK hydrolyzes its bound ATP, resulting in the formation of a stable complex. GrpE releases ADP from DnaK; ATP binding to DnaK triggers the release of the substrate protein, thus completing the reaction cycle. Several rounds of ATP-dependent interactions between DnaJ, DnaK and GrpE are required for fully efficient folding. This is Protein GrpE from Lachnoclostridium phytofermentans (strain ATCC 700394 / DSM 18823 / ISDg) (Clostridium phytofermentans).